Reading from the N-terminus, the 699-residue chain is Elongation factor G (699 aa).

The tr-type G domain occupies 8–283 (EHIRNIGICA…AVVDFLPSPI (276 aa)). GTP is bound by residues 17-24 (AHIDAGKT), 81-85 (DTPGH), and 135-138 (NKMD).

Belongs to the TRAFAC class translation factor GTPase superfamily. Classic translation factor GTPase family. EF-G/EF-2 subfamily.

It localises to the cytoplasm. In terms of biological role, catalyzes the GTP-dependent ribosomal translocation step during translation elongation. During this step, the ribosome changes from the pre-translocational (PRE) to the post-translocational (POST) state as the newly formed A-site-bound peptidyl-tRNA and P-site-bound deacylated tRNA move to the P and E sites, respectively. Catalyzes the coordinated movement of the two tRNA molecules, the mRNA and conformational changes in the ribosome. This Rickettsia felis (strain ATCC VR-1525 / URRWXCal2) (Rickettsia azadi) protein is Elongation factor G.